The sequence spans 296 residues: 2-haloacid dehalogenase, configuration-inverting (296 aa).

Belongs to the HAD-like hydrolase superfamily. S-2-haloalkanoic acid dehalogenase family.

The enzyme catalyses an (S)-2-haloacid + H2O = a (2R)-2-hydroxycarboxylate + a halide anion + H(+). The catalysed reaction is an (R)-2-haloacid + H2O = a (2S)-2-hydroxycarboxylate + a halide anion + H(+). Its function is as follows. Dehalogenates both (S)- and (R)-2-haloalkanoic acids to the corresponding (R)- and (S)-hydroxyalkanoic acids, respectively, with inversion of configuration at C-2. Acts on 2-haloalkanoic acids whose carbon chain lengths are five or less. This Alcaligenes xylosoxydans xylosoxydans (Achromobacter xylosoxidans) protein is 2-haloacid dehalogenase, configuration-inverting (dhlC).